Here is a 194-residue protein sequence, read N- to C-terminus: MPEPYYSMYRKEDVVLDKSFFTPLEGKPDHFRTISKMWGMWEASEDHWKEVITKFWGYITLIEDDNLVYLHDLTSTVFDLANQKVPESFEGQSVLPIMRQHQDNQRKGVLGQLAGHFVYFEQRMWRRKDYKLVFNATDVCELYNIRNDPEEMHNLFYDPQYNRIKKEMLEEMRAEMKRLNDPLENWVYRIIDEI.

This is an uncharacterized protein from Haemophilus influenzae (strain ATCC 51907 / DSM 11121 / KW20 / Rd).